A 640-amino-acid chain; its full sequence is Transcription factor VHR1 (640 aa).

Residues 118–128 (NVNNSISSNST) show a composition bias toward low complexity. The disordered stretch occupies residues 118–139 (NVNNSISSNSTSDDEISPSIYQ). A Phosphoserine modification is found at S409. The interval 580 to 640 (NRISKSPMNE…LPQPVFQPLL (61 aa)) is disordered. Residues 588–608 (NEENSNTTLNTGTSTSNTNNN) are compositionally biased toward low complexity. Residues 621 to 631 (KNKNSFQNGNL) are compositionally biased toward polar residues.

Belongs to the VHR1 family.

Its subcellular location is the cytoplasm. It localises to the nucleus. Its function is as follows. Transcription factor that binds to the VHRE consensus sequence in promoters of VHT1 and BIO5, and regulates their biotin-dependent expression. This chain is Transcription factor VHR1 (VHR1), found in Saccharomyces cerevisiae (strain ATCC 204508 / S288c) (Baker's yeast).